The following is a 172-amino-acid chain: Odorant-binding protein (172 aa).

The first 15 residues, 1-15, serve as a signal peptide directing secretion; sequence MVKFLLIVLALGVSC. Disulfide bonds link cysteine 60-cysteine 64 and cysteine 79-cysteine 170.

The protein belongs to the calycin superfamily. Lipocalin family. As to quaternary structure, homodimer.

Its subcellular location is the secreted. This protein is found in nasal epithelium and it binds a wide variety of chemical odorants. This chain is Odorant-binding protein (Obp1f), found in Rattus norvegicus (Rat).